The primary structure comprises 159 residues: Transcriptional repressor NrdR (159 aa).

The segment at 3 to 34 (CPTCQNTDSRVLESRSADTGKSVRRRRECLNC) is a zinc-finger region. Residues 49 to 139 (ISVIKKDGSR…VYRKFNGVKD (91 aa)) form the ATP-cone domain.

It belongs to the NrdR family. It depends on Zn(2+) as a cofactor.

Functionally, negatively regulates transcription of bacterial ribonucleotide reductase nrd genes and operons by binding to NrdR-boxes. This chain is Transcriptional repressor NrdR, found in Prochlorococcus marinus subsp. pastoris (strain CCMP1986 / NIES-2087 / MED4).